The primary structure comprises 194 residues: A-type ATP synthase subunit E (194 aa).

Belongs to the V-ATPase E subunit family. In terms of assembly, has multiple subunits with at least A(3), B(3), C, D, E, F, H, I and proteolipid K(x).

The protein resides in the cell membrane. Its function is as follows. Component of the A-type ATP synthase that produces ATP from ADP in the presence of a proton gradient across the membrane. The polypeptide is A-type ATP synthase subunit E (Saccharolobus islandicus (strain M.16.27) (Sulfolobus islandicus)).